The sequence spans 345 residues: Lysine-specific demethylase JMJ32 (345 aa).

One can recognise a JmjC domain in the interval 122–315; the sequence is GYLQQQNDCF…IKYAYFNFLQ (194 aa). Fe cation contacts are provided by His-174, Asp-176, and His-281.

The protein belongs to the JARID1 histone demethylase family. It depends on Fe(2+) as a cofactor. As to expression, expressed ubiquitously including in vasculatures, leaves, siliques, roots and inflorescences. Present in the root meristem. Accumulates in cotyledons and root tips of young seedlings.

It localises to the nucleus. The protein localises to the cytoplasm. It is found in the endoplasmic reticulum. The enzyme catalyses N(6),N(6),N(6)-trimethyl-L-lysyl(27)-[histone H3] + 2-oxoglutarate + O2 = N(6),N(6)-dimethyl-L-lysyl(27)-[histone H3] + formaldehyde + succinate + CO2. It carries out the reaction N(6),N(6)-dimethyl-L-lysyl(27)-[histone H3] + 2-oxoglutarate + O2 = N(6)-methyl-L-lysyl(27)-[histone H3] + formaldehyde + succinate + CO2. It catalyses the reaction N(6),N(6),N(6)-trimethyl-L-lysyl(27)-[histone H3] + 2 2-oxoglutarate + 2 O2 = N(6)-methyl-L-lysyl(27)-[histone H3] + 2 formaldehyde + 2 succinate + 2 CO2. Functionally, histone demethylase that demethylates 'Lys-27' (H3K27me) of histone H3 with a specific activity for H3K27me3 and H3K27me2, and involved in the regulation of gene expression. No activity on H3K27me1. Together with JMJ30, regulates the flowering-repressor FLOWERING LOCUS C (FLC) locus by removing the repressive histone modification H3 lysine 27 trimethylation (H3K27me3), especially at elevated temperatures (e.g. 29 degrees Celsius), thus preventing extreme precocious flowering. JMJ30 and JMJ32 are regulators involved in the integration of abscisic acid (ABA) and brassinosteroids (BR) signaling pathways. Together with JMJ30, controls ABA-mediated growth arrest during the post-germination stage in unfavorable conditions, and responses to ABA during root development, via the removal of repressive histone mark (H3K27me3) from the SnRK2.8 promoter, thus promoting SnRK2.8 expression and subsequent kinase-dependent ABI3 activation. In addition, removes the repressive histone marks (H3K27me3) from the BZR1 locus in response to stress and ABA, thus activating the BR signaling pathway which, in turn, inhibits the ABA signaling pathway. The protein is Lysine-specific demethylase JMJ32 of Arabidopsis thaliana (Mouse-ear cress).